A 351-amino-acid polypeptide reads, in one-letter code: Riboflavin-binding protein RibY (351 aa).

Positions 1 to 19 (MMKLRVLTLGILIILLITA) are cleaved as a signal peptide. C20 carries N-palmitoyl cysteine lipidation. Residue C20 is the site of S-diacylglycerol cysteine attachment.

Belongs to the NMT1 family. The complex is likely composed of an ATP-binding protein, a transmembrane protein (RibX) and a solute-binding protein (RibY).

It is found in the cell membrane. In terms of biological role, part of an ABC transporter complex that transports riboflavin into the cell. Binds riboflavin. In Chloroflexus aurantiacus (strain ATCC 29366 / DSM 635 / J-10-fl), this protein is Riboflavin-binding protein RibY.